The chain runs to 594 residues: Proline--tRNA ligase (594 aa).

It belongs to the class-II aminoacyl-tRNA synthetase family. ProS type 1 subfamily. As to quaternary structure, homodimer.

It localises to the cytoplasm. It catalyses the reaction tRNA(Pro) + L-proline + ATP = L-prolyl-tRNA(Pro) + AMP + diphosphate. In terms of biological role, catalyzes the attachment of proline to tRNA(Pro) in a two-step reaction: proline is first activated by ATP to form Pro-AMP and then transferred to the acceptor end of tRNA(Pro). As ProRS can inadvertently accommodate and process non-cognate amino acids such as alanine and cysteine, to avoid such errors it has two additional distinct editing activities against alanine. One activity is designated as 'pretransfer' editing and involves the tRNA(Pro)-independent hydrolysis of activated Ala-AMP. The other activity is designated 'posttransfer' editing and involves deacylation of mischarged Ala-tRNA(Pro). The misacylated Cys-tRNA(Pro) is not edited by ProRS. The sequence is that of Proline--tRNA ligase from Synechococcus sp. (strain WH7803).